Consider the following 156-residue polypeptide: Small ribosomal subunit protein uS7c (156 aa).

The protein belongs to the universal ribosomal protein uS7 family. As to quaternary structure, part of the 30S ribosomal subunit.

It localises to the plastid. The protein resides in the chloroplast. In terms of biological role, one of the primary rRNA binding proteins, it binds directly to 16S rRNA where it nucleates assembly of the head domain of the 30S subunit. The chain is Small ribosomal subunit protein uS7c (rps7) from Euglena gracilis.